The following is a 319-amino-acid chain: MSLNFLDFEQPIAELEAKIDSLTAVSRQDEKLDINIDEEVHRLREKSVELTRKIFADLGAWQVAQLARHPRRPYTLDYVRLAFDEFDELAGDRAFADDKAIVGGIARLDGRPVMIIGHQKGRETKEKIRRNFGMPAPEGYRKALRLMEMAERFKMPIITFIDTPGAYPGVGAEERGQSEAIARNLREMSRLSVPVICTVIGEGGSGGALAIGVGDKVNMLQYSTYSVISPEGCASILWKSADKAPLAAEAMGIIAPRLKELKLIDSIVPEPLGGAHRNPEAMAASLKAQLLADLADLDLLSEEELLNRRYQRLMSYGYA.

One can recognise a CoA carboxyltransferase C-terminal domain in the interval 35–296 (NIDEEVHRLR…KAQLLADLAD (262 aa)).

It belongs to the AccA family. As to quaternary structure, acetyl-CoA carboxylase is a heterohexamer composed of biotin carboxyl carrier protein (AccB), biotin carboxylase (AccC) and two subunits each of ACCase subunit alpha (AccA) and ACCase subunit beta (AccD).

It is found in the cytoplasm. The enzyme catalyses N(6)-carboxybiotinyl-L-lysyl-[protein] + acetyl-CoA = N(6)-biotinyl-L-lysyl-[protein] + malonyl-CoA. It participates in lipid metabolism; malonyl-CoA biosynthesis; malonyl-CoA from acetyl-CoA: step 1/1. Functionally, component of the acetyl coenzyme A carboxylase (ACC) complex. First, biotin carboxylase catalyzes the carboxylation of biotin on its carrier protein (BCCP) and then the CO(2) group is transferred by the carboxyltransferase to acetyl-CoA to form malonyl-CoA. This is Acetyl-coenzyme A carboxylase carboxyl transferase subunit alpha from Klebsiella pneumoniae subsp. pneumoniae (strain ATCC 700721 / MGH 78578).